The following is a 2180-amino-acid chain: DNA polymerase epsilon catalytic subunit A (2180 aa).

Residues C2067, C2070, C2089, and C2092 each coordinate Zn(2+). The CysA-type zinc finger occupies 2067-2092 (CENCAYFSDLDICMSDLRSMFKCSKC). [4Fe-4S] cluster is bound by residues C2123, C2126, C2138, and C2140. The CysB motif signature appears at 2123-2140 (CAKCRKIKSDTMSAYCTC).

The protein belongs to the DNA polymerase type-B family. As to quaternary structure, heterotetramer. Consists of 4 subunits: POL2, DPB2, DPB3 and DPB4. Requires [4Fe-4S] cluster as cofactor.

The protein localises to the nucleus. It carries out the reaction DNA(n) + a 2'-deoxyribonucleoside 5'-triphosphate = DNA(n+1) + diphosphate. Its function is as follows. DNA polymerase II participates in chromosomal DNA replication. This is DNA polymerase epsilon catalytic subunit A (POL2) from Eremothecium gossypii (strain ATCC 10895 / CBS 109.51 / FGSC 9923 / NRRL Y-1056) (Yeast).